The chain runs to 470 residues: Siroheme synthase (470 aa).

The segment at 1–201 (MDYFPIFCQL…NDHVQADQHV (201 aa)) is precorrin-2 dehydrogenase /sirohydrochlorin ferrochelatase. Residues 22–23 (EI) and 43–44 (CE) contribute to the NAD(+) site. Position 128 is a phosphoserine (Ser128). Residues 213–470 (GEVVLVGAGP…KVTECVAHVG (258 aa)) are uroporphyrinogen-III C-methyltransferase. Residue Pro222 participates in S-adenosyl-L-methionine binding. The active-site Proton acceptor is Asp245. The Proton donor role is filled by Lys267. S-adenosyl-L-methionine contacts are provided by residues 298-300 (GGD), Ile303, 328-329 (TA), Met379, and Gly408.

The protein in the N-terminal section; belongs to the precorrin-2 dehydrogenase / sirohydrochlorin ferrochelatase family. This sequence in the C-terminal section; belongs to the precorrin methyltransferase family.

The catalysed reaction is uroporphyrinogen III + 2 S-adenosyl-L-methionine = precorrin-2 + 2 S-adenosyl-L-homocysteine + H(+). The enzyme catalyses precorrin-2 + NAD(+) = sirohydrochlorin + NADH + 2 H(+). It carries out the reaction siroheme + 2 H(+) = sirohydrochlorin + Fe(2+). The protein operates within cofactor biosynthesis; adenosylcobalamin biosynthesis; precorrin-2 from uroporphyrinogen III: step 1/1. It participates in cofactor biosynthesis; adenosylcobalamin biosynthesis; sirohydrochlorin from precorrin-2: step 1/1. It functions in the pathway porphyrin-containing compound metabolism; siroheme biosynthesis; precorrin-2 from uroporphyrinogen III: step 1/1. Its pathway is porphyrin-containing compound metabolism; siroheme biosynthesis; siroheme from sirohydrochlorin: step 1/1. The protein operates within porphyrin-containing compound metabolism; siroheme biosynthesis; sirohydrochlorin from precorrin-2: step 1/1. In terms of biological role, multifunctional enzyme that catalyzes the SAM-dependent methylations of uroporphyrinogen III at position C-2 and C-7 to form precorrin-2 via precorrin-1. Then it catalyzes the NAD-dependent ring dehydrogenation of precorrin-2 to yield sirohydrochlorin. Finally, it catalyzes the ferrochelation of sirohydrochlorin to yield siroheme. In Yersinia pestis, this protein is Siroheme synthase.